Here is a 159-residue protein sequence, read N- to C-terminus: Large ribosomal subunit protein uL22 (159 aa).

The protein belongs to the universal ribosomal protein uL22 family. As to quaternary structure, part of the 50S ribosomal subunit.

This protein binds specifically to 23S rRNA. It makes multiple contacts with different domains of the 23S rRNA in the assembled 50S subunit and ribosome. In terms of biological role, the globular domain of the protein is located near the polypeptide exit tunnel on the outside of the subunit, while an extended beta-hairpin is found that lines the wall of the exit tunnel in the center of the 70S ribosome. This chain is Large ribosomal subunit protein uL22, found in Ignicoccus hospitalis (strain KIN4/I / DSM 18386 / JCM 14125).